The primary structure comprises 294 residues: Nucleotide-binding protein Smal_0950 (294 aa).

16–23 lines the ATP pocket; it reads GLSGSGKS. A GTP-binding site is contributed by 69–72; it reads DVRG.

The protein belongs to the RapZ-like family.

In terms of biological role, displays ATPase and GTPase activities. This Stenotrophomonas maltophilia (strain R551-3) protein is Nucleotide-binding protein Smal_0950.